We begin with the raw amino-acid sequence, 568 residues long: Probable inactive poly [ADP-ribose] polymerase SRO1 (568 aa).

Residues 1–18 (MEAKIVKVSDSSYKDGLG) show a composition bias toward basic and acidic residues. The disordered stretch occupies residues 1-32 (MEAKIVKVSDSSYKDGLGKKRKHPGNYTPYDS). The region spanning 77–152 (RYFSYYKKTG…ETGVKTQLAW (76 aa)) is the WWE domain. Disordered regions lie at residues 220–241 (DFQA…DSCS) and 453–500 (ILPT…RRPR). Residues 245–463 (DDAVEKWDKT…LPTTQSRHES (219 aa)) form the PARP catalytic domain. In terms of domain architecture, RST spans 497–568 (RRPRSPIMPF…TITGLQRSLG (72 aa)).

As to quaternary structure, interacts with DREB2A, DREB2B, DREB2C and NAC082. In terms of tissue distribution, expressed in young developing tissues, such as young leaves and flowers and root tips. In mature plants, expressed in vasculature of leaves and roots.

The protein localises to the nucleus matrix. Probable inactive ADP-ribosyltransferase that functions with RCD1 to regulate oxidative stress, hormonal and developmental responses. May regulate some stress-responsive genes. Seems to play a smaller developmental role than R. This Arabidopsis thaliana (Mouse-ear cress) protein is Probable inactive poly [ADP-ribose] polymerase SRO1 (SRO1).